The sequence spans 347 residues: MWSYVWLPLVALSLFKDSIIMAKAATILLPSQTGFDISRSPVCSAPDPNLNYRPVIGILSHPGDGASGRLSNATDASSIAASYVKLAESGGARVIPLIFNEPEEILFQKLELVNGVILTGGWAKEGLYFEIVKKIFNKVLERNDAGEHFPIYAICLGFELLTMIISQNRDIFEKMDARNSASSLQFVENVNIQGTIFQRFPPELLKKLGTDCLVMQNHRFGISPQSFEGNIALSNFFKIVTTCVDDNGKVYVSTVQSTKYPVTGFQWHPEKNAFEWGSSKIPHSEDAIQVTQHAANHLVSEARKSLNRPESKKVLSNLIYNYKPTYCGYAGIGYDEVYIFTQQRSLL.

The signal sequence occupies residues 1-22 (MWSYVWLPLVALSLFKDSIIMA). The Gamma-glutamyl hydrolase domain occupies 45–341 (APDPNLNYRP…IGYDEVYIFT (297 aa)). Cysteine 155 acts as the Nucleophile in catalysis. Histidine 268 (proton donor) is an active-site residue.

This sequence belongs to the peptidase C26 family. As to expression, expressed in roots, in leaves, stems and siliques.

It is found in the vacuole. Its subcellular location is the secreted. The protein localises to the extracellular space. It localises to the cell wall. It carries out the reaction (6S)-5,6,7,8-tetrahydrofolyl-(gamma-L-Glu)(n) + (n-1) H2O = (6S)-5,6,7,8-tetrahydrofolate + (n-1) L-glutamate. Its function is as follows. Cleaves the polyglutamate sidechains of folate polyglutamates in the vacuole. Is important for polyglutamyl tail length determination before vacuolar exit. Plays a role on folate stability and intracellular folate content. Has endopeptidase activity against 4-amino-10-methylpteroyl penta-, tetra-, tri- and di-gamma-L-glutamate substrates and is responsible for the production of folic acid, also called pteroylglutamic acid (PteGlu) from teroylpolyglutamates. This is Gamma-glutamyl hydrolase 2 (GGH2) from Arabidopsis thaliana (Mouse-ear cress).